The sequence spans 623 residues: Prothrombin (623 aa).

The first 24 residues, 1-24 (MAHVRGLQLPGCLALAALCTLVHS), serve as a signal peptide directing secretion. The propeptide occupies 25-43 (QHVFLAPQQALSLLQRVRR). The Gla domain occupies 44-90 (ANSVFLEEVRKGNLERECVEETCSYEEAFEALESSTATDVFWAKYTA). 4-carboxyglutamate is present on residues Glu-50, Glu-51, Glu-58, Glu-60, Glu-63, Glu-64, Glu-69, Glu-70, Glu-73, and Glu-76. Cys-61 and Cys-66 form a disulfide bridge. Intrachain disulfides connect Cys-91-Cys-104, Cys-109-Cys-187, Cys-130-Cys-170, Cys-158-Cys-182, Cys-214-Cys-292, Cys-235-Cys-275, Cys-263-Cys-287, Cys-337-Cys-483, Cys-392-Cys-408, Cys-537-Cys-551, and Cys-565-Cys-595. 2 Kringle domains span residues 108–187 (NCAE…IPVC) and 213–292 (QCVP…LNYC). N-linked (GlcNAc...) asparagine glycans are attached at residues Asn-122 and Asn-144. One can recognise a Peptidase S1 domain in the interval 365–619 (IVEGSDAEIG…LKKWIQKVID (255 aa)). Catalysis depends on His-407, which acts as the Charge relay system. An N-linked (GlcNAc...) asparagine glycan is attached at Asn-417. Asp-463 functions as the Charge relay system in the catalytic mechanism. Residues 552–574 (AGYKPDEGKRGDACEGDSGGPFV) are high affinity receptor-binding region which also known as the TP508 peptide. Catalysis depends on Ser-569, which acts as the Charge relay system.

Belongs to the peptidase S1 family. As to quaternary structure, heterodimer (named alpha-thrombin) of a light and a heavy chain; disulfide-linked. Forms a heterodimer with SERPINA5. In plasma, interacts (via N-terminus) with alpha-1-microglobulin; this interaction does not prevent the activation of prothrombin to thrombin. Post-translationally, the gamma-carboxyglutamyl residues, which bind calcium ions, result from the carboxylation of glutamyl residues by a microsomal enzyme, the vitamin K-dependent carboxylase. The modified residues are necessary for the calcium-dependent interaction with a negatively charged phospholipid surface, which is essential for the conversion of prothrombin to thrombin. In terms of processing, in the penultimate step of the coagulation cascade, prothrombin is converted to thrombin by the prothrombinase complex composed of factor Xa (F10), cofactor Va (F5), and phospholipids. This activation requires factor Xa-catalyzed sequential cleavage at 2 sites, Arg-315 and Arg-364, along 2 possible pathways. In the first pathway, the first cleavage occurs at Arg-315, leading to the formation of the inactive intermediate prethrombin-2. This pathway preferentially occurs on platelets and in the absence of cofactor Va. In the second pathway, the first cleavage occurs at Arg-364, which separates protease domain into 2 chains that remain connected through a disulfide bond and generates the active intermediate meizothrombin. The presence of cofactor Va directs activation along the meizothrombin pathway and greatly accelerates the rate of cleavage at Arg-364, but has a smaller effect on the cleavage of meizothrombin at Arg-315. Meizothrombin accumulates as an intermediate when prothrombinase is assembled on the membrane of red blood cells.

It carries out the reaction Selective cleavage of Arg-|-Gly bonds in fibrinogen to form fibrin and release fibrinopeptides A and B.. Its activity is regulated as follows. Activity is promoted in the presence of negatively charged surfaces, such as polyphosphate and dextran sulfate. Inhibited by SERPINA5. Its function is as follows. Thrombin, which cleaves bonds after Arg and Lys, converts fibrinogen to fibrin and activates factors V, VII, VIII, XIII, and, in complex with thrombomodulin, protein C. Functions in blood homeostasis, inflammation and wound healing. Activates coagulation factor XI (F11); activation is promoted by the contact with negatively charged surfaces. Triggers the production of pro-inflammatory cytokines, such as MCP-1/CCL2 and IL8/CXCL8, in endothelial cells. The sequence is that of Prothrombin (F2) from Pongo abelii (Sumatran orangutan).